The sequence spans 105 residues: UPF0145 protein Ping_0381 (105 aa).

This sequence belongs to the UPF0145 family.

The protein is UPF0145 protein Ping_0381 of Psychromonas ingrahamii (strain DSM 17664 / CCUG 51855 / 37).